The following is a 157-amino-acid chain: Cyclic pyranopterin monophosphate synthase (157 aa).

Residues 74-76 (MCH) and 112-113 (ME) contribute to the substrate site. Asp127 is an active-site residue.

It belongs to the MoaC family. As to quaternary structure, homohexamer; trimer of dimers.

It catalyses the reaction (8S)-3',8-cyclo-7,8-dihydroguanosine 5'-triphosphate = cyclic pyranopterin phosphate + diphosphate. Its pathway is cofactor biosynthesis; molybdopterin biosynthesis. Its function is as follows. Catalyzes the conversion of (8S)-3',8-cyclo-7,8-dihydroguanosine 5'-triphosphate to cyclic pyranopterin monophosphate (cPMP). This Campylobacter jejuni (strain RM1221) protein is Cyclic pyranopterin monophosphate synthase.